Here is a 506-residue protein sequence, read N- to C-terminus: Probable cytochrome P450 309a1 (506 aa).

A phosphothreonine mark is found at T75, T78, and T81. Heme is bound at residue C452.

This sequence belongs to the cytochrome P450 family. Heme is required as a cofactor.

The protein localises to the endoplasmic reticulum membrane. Its subcellular location is the microsome membrane. Functionally, may be involved in the metabolism of insect hormones and in the breakdown of synthetic insecticides. This is Probable cytochrome P450 309a1 (Cyp309a1) from Drosophila melanogaster (Fruit fly).